A 165-amino-acid chain; its full sequence is Small ribosomal subunit protein uS5 (165 aa).

Residues 10 to 73 (LKEKVVSISR…EDAKKNLVEV (64 aa)) enclose the S5 DRBM domain.

Belongs to the universal ribosomal protein uS5 family. Part of the 30S ribosomal subunit. Contacts proteins S4 and S8.

With S4 and S12 plays an important role in translational accuracy. Functionally, located at the back of the 30S subunit body where it stabilizes the conformation of the head with respect to the body. This is Small ribosomal subunit protein uS5 from Clostridium perfringens (strain ATCC 13124 / DSM 756 / JCM 1290 / NCIMB 6125 / NCTC 8237 / Type A).